A 93-amino-acid chain; its full sequence is Alpha-defensin 9 (93 aa).

Residues M1–A19 form the signal peptide. Residues D20–S58 constitute a propeptide that is removed on maturation. Residues Q23–E56 are disordered. Disulfide bonds link C64-C92, C66-C81, and C71-C91.

Belongs to the alpha-defensin family. As to expression, paneth cells of the small bowel.

The protein resides in the secreted. Functionally, probably contributes to the antimicrobial barrier function of the small bowel mucosa. The polypeptide is Alpha-defensin 9 (Defa9) (Mus musculus (Mouse)).